The chain runs to 178 residues: Crossover junction endodeoxyribonuclease RuvC (178 aa).

Residues Asp-14, Glu-73, and Asp-145 contribute to the active site. Mg(2+) contacts are provided by Asp-14, Glu-73, and Asp-145.

It belongs to the RuvC family. As to quaternary structure, homodimer which binds Holliday junction (HJ) DNA. The HJ becomes 2-fold symmetrical on binding to RuvC with unstacked arms; it has a different conformation from HJ DNA in complex with RuvA. In the full resolvosome a probable DNA-RuvA(4)-RuvB(12)-RuvC(2) complex forms which resolves the HJ. The cofactor is Mg(2+).

The protein localises to the cytoplasm. It carries out the reaction Endonucleolytic cleavage at a junction such as a reciprocal single-stranded crossover between two homologous DNA duplexes (Holliday junction).. Its function is as follows. The RuvA-RuvB-RuvC complex processes Holliday junction (HJ) DNA during genetic recombination and DNA repair. Endonuclease that resolves HJ intermediates. Cleaves cruciform DNA by making single-stranded nicks across the HJ at symmetrical positions within the homologous arms, yielding a 5'-phosphate and a 3'-hydroxyl group; requires a central core of homology in the junction. The consensus cleavage sequence is 5'-(A/T)TT(C/G)-3'. Cleavage occurs on the 3'-side of the TT dinucleotide at the point of strand exchange. HJ branch migration catalyzed by RuvA-RuvB allows RuvC to scan DNA until it finds its consensus sequence, where it cleaves and resolves the cruciform DNA. The sequence is that of Crossover junction endodeoxyribonuclease RuvC from Nitrosomonas eutropha (strain DSM 101675 / C91 / Nm57).